The primary structure comprises 999 residues: Bifunctional glutamine synthetase adenylyltransferase/adenylyl-removing enzyme (999 aa).

The interval 1 to 483 (MTPGRRSSTF…LHEKLFYRPL (483 aa)) is adenylyl removase. Positions 489-999 (QLAPGEARLS…RTVVEDLFYA (511 aa)) are adenylyl transferase.

This sequence belongs to the GlnE family. Mg(2+) serves as cofactor.

The enzyme catalyses [glutamine synthetase]-O(4)-(5'-adenylyl)-L-tyrosine + phosphate = [glutamine synthetase]-L-tyrosine + ADP. The catalysed reaction is [glutamine synthetase]-L-tyrosine + ATP = [glutamine synthetase]-O(4)-(5'-adenylyl)-L-tyrosine + diphosphate. Adenylation and deadenylation of glutamate--ammonia ligase. In terms of biological role, involved in the regulation of glutamine synthetase GlnA, a key enzyme in the process to assimilate ammonia. When cellular nitrogen levels are high, the C-terminal adenylyl transferase (AT) inactivates GlnA by covalent transfer of an adenylyl group from ATP to specific tyrosine residue of GlnA, thus reducing its activity. Conversely, when nitrogen levels are low, the N-terminal adenylyl removase (AR) activates GlnA by removing the adenylyl group by phosphorolysis, increasing its activity. The regulatory region of GlnE binds the signal transduction protein PII (GlnB) which indicates the nitrogen status of the cell. This Streptomyces coelicolor (strain ATCC BAA-471 / A3(2) / M145) protein is Bifunctional glutamine synthetase adenylyltransferase/adenylyl-removing enzyme.